A 1092-amino-acid chain; its full sequence is Leukemia inhibitory factor receptor (1092 aa).

The signal sequence occupies residues 1-43 (MAAYSWWRQPSWMVDNKRSRMTPNLPWLLSALTLLHLTMHANG). The Extracellular segment spans residues 44–828 (LKRGVQDLKC…SMFVVTKENS (785 aa)). Residues 45 to 126 (KRGVQDLKCT…QSKFTLNEKD (82 aa)) form the Fibronectin type-III 1 domain. 2 disulfides stabilise this stretch: cysteine 53-cysteine 63 and cysteine 80-cysteine 88. N-linked (GlcNAc...) asparagine glycans are attached at residues asparagine 164, asparagine 199, asparagine 238, and asparagine 261. Cystine bridges form between cysteine 208–cysteine 265 and cysteine 336–cysteine 346. Fibronectin type-III domains are found at residues 330 to 429 (VPQK…VAPH), 430 to 529 (DPTS…TEAT), 533 to 624 (GPDT…IPND), 622 to 714 (PNDD…IGYV), and 719 to 828 (PIVA…KENS). N-linked (GlcNAc...) asparagine glycans are attached at residues asparagine 385, asparagine 402, asparagine 421, asparagine 440, asparagine 453, and asparagine 476. The cysteines at positions 461 and 506 are disulfide-linked. The short motif at 514 to 518 (WSRWS) is the WSXWS motif element. Asparagine 567, asparagine 647, asparagine 658, asparagine 675, asparagine 724, and asparagine 782 each carry an N-linked (GlcNAc...) asparagine glycan. The helical transmembrane segment at 829–853 (VGLIIAILIPVAVAVIVGVVTSILC) threads the bilayer. Residues 854-1092 (YRKREWIKET…TNFFQNKPND (239 aa)) lie on the Cytoplasmic side of the membrane. A Box 1 motif motif is present at residues 864-872 (FYPDIPNPE). Residues serine 922 and serine 1039 each carry the phosphoserine modification. Residues 1009–1092 (EDTAAEDEEG…TNFFQNKPND (84 aa)) are disordered. 2 stretches are compositionally biased toward polar residues: residues 1027 to 1062 (ANVNTWNLVSPDSPRSTDSNNEVVSFGSPCSINSRQ) and 1081 to 1092 (SFTNFFQNKPND).

This sequence belongs to the type I cytokine receptor family. Type 2 subfamily. In terms of assembly, heterodimer composed of LIFR and IL6ST. The heterodimer formed by LIFR and IL6ST interacts with the complex formed by CNTF and CNTFR. As to expression, placenta, liver, kidney, heart, lung, brain, and embryos. The liver may be the primary site of synthesis of the secreted form.

The protein resides in the cell membrane. Its subcellular location is the secreted. Its function is as follows. Signal-transducing molecule. May have a common pathway with IL6ST. The soluble form inhibits the biological activity of LIF by blocking its binding to receptors on target cells. The sequence is that of Leukemia inhibitory factor receptor (Lifr) from Mus musculus (Mouse).